A 250-amino-acid chain; its full sequence is Hydroxyacylglutathione hydrolase (250 aa).

Residues H53, H55, D57, H58, H111, D128, and H166 each contribute to the Zn(2+) site.

Belongs to the metallo-beta-lactamase superfamily. Glyoxalase II family. As to quaternary structure, monomer. Zn(2+) serves as cofactor.

It carries out the reaction an S-(2-hydroxyacyl)glutathione + H2O = a 2-hydroxy carboxylate + glutathione + H(+). The protein operates within secondary metabolite metabolism; methylglyoxal degradation; (R)-lactate from methylglyoxal: step 2/2. Its function is as follows. Thiolesterase that catalyzes the hydrolysis of S-D-lactoyl-glutathione to form glutathione and D-lactic acid. This is Hydroxyacylglutathione hydrolase from Methylobacillus flagellatus (strain ATCC 51484 / DSM 6875 / VKM B-1610 / KT).